Consider the following 107-residue polypeptide: Ferredoxin (107 aa).

4Fe-4S ferredoxin-type domains follow at residues 8–37 and 38–67; these read ERVV…LDEN and GKSR…KASE. [4Fe-4S] cluster is bound by residues cysteine 17, cysteine 20, and cysteine 23. Positions 27, 47, and 53 each coordinate [3Fe-4S] cluster. Cysteine 57 is a [4Fe-4S] cluster binding site.

In terms of assembly, monomer. It depends on [4Fe-4S] cluster as a cofactor. The cofactor is [3Fe-4S] cluster. Post-translationally, the N-terminus is blocked.

Ferredoxins are iron-sulfur proteins that transfer electrons in a wide variety of metabolic reactions. This is Ferredoxin from Pyrobaculum islandicum (strain DSM 4184 / JCM 9189 / GEO3).